We begin with the raw amino-acid sequence, 482 residues long: tRNA sulfurtransferase (482 aa).

The region spanning 61 to 165 is the THUMP domain; it reads EQAIEALACI…GEELFIVSAI (105 aa). ATP is bound by residues 183-184, Lys-265, Gly-287, and Gln-296; that span reads LI. The cysteines at positions 344 and 456 are disulfide-linked. The Rhodanese domain occupies 404-482; the sequence is SGDNEVILDI…GFANVKVYRP (79 aa). Cys-456 serves as the catalytic Cysteine persulfide intermediate.

This sequence belongs to the ThiI family.

Its subcellular location is the cytoplasm. The enzyme catalyses [ThiI sulfur-carrier protein]-S-sulfanyl-L-cysteine + a uridine in tRNA + 2 reduced [2Fe-2S]-[ferredoxin] + ATP + H(+) = [ThiI sulfur-carrier protein]-L-cysteine + a 4-thiouridine in tRNA + 2 oxidized [2Fe-2S]-[ferredoxin] + AMP + diphosphate. It carries out the reaction [ThiS sulfur-carrier protein]-C-terminal Gly-Gly-AMP + S-sulfanyl-L-cysteinyl-[cysteine desulfurase] + AH2 = [ThiS sulfur-carrier protein]-C-terminal-Gly-aminoethanethioate + L-cysteinyl-[cysteine desulfurase] + A + AMP + 2 H(+). Its pathway is cofactor biosynthesis; thiamine diphosphate biosynthesis. Its function is as follows. Catalyzes the ATP-dependent transfer of a sulfur to tRNA to produce 4-thiouridine in position 8 of tRNAs, which functions as a near-UV photosensor. Also catalyzes the transfer of sulfur to the sulfur carrier protein ThiS, forming ThiS-thiocarboxylate. This is a step in the synthesis of thiazole, in the thiamine biosynthesis pathway. The sulfur is donated as persulfide by IscS. The polypeptide is tRNA sulfurtransferase (Aeromonas hydrophila subsp. hydrophila (strain ATCC 7966 / DSM 30187 / BCRC 13018 / CCUG 14551 / JCM 1027 / KCTC 2358 / NCIMB 9240 / NCTC 8049)).